A 1398-amino-acid chain; its full sequence is Protein timeless (1398 aa).

The necessary for normal circadian rhythm stretch occupies residues 237–268 (VSTLQKLLSLWFEASLSESSEDNESNTSPPKQ). 5 disordered regions span residues 254 to 300 (ESSE…GGMR), 322 to 452 (ARVP…QKFN), 478 to 555 (TKGK…LRRK), 1127 to 1147 (TASS…SSVS), and 1220 to 1239 (NHRT…SSTT). A compositionally biased stretch (low complexity) spans 273–290 (SSPMLTSDPTSDSSDNGS). A compositionally biased stretch (gly residues) spans 291-300 (NGRGMGGGMR). Residues 338–355 (MTGNDSEQPGSPEQSQPA) are compositionally biased toward polar residues. The segment covering 365–375 (EDQRHRQLNEH) has biased composition (basic and acidic residues). Over residues 376-390 (GEEDEDEDEVEEEEY) the composition is skewed to acidic residues. Composition is skewed to polar residues over residues 400–421 (LNLT…SSAP), 440–452 (ASTS…QKFN), and 504–515 (QVENQESISTSS). Over residues 522 to 531 (QGKPQHQKPP) the composition is skewed to low complexity. The short motif at 550-560 (KELRRKKLVKR) is the Nuclear localization signal element.

The protein belongs to the timeless family. As to quaternary structure, forms a heterodimer with period (PER); the complex then translocates into the nucleus. In terms of processing, phosphorylated with a circadian rhythmicity. In terms of tissue distribution, expressed in head, photoreceptors, lateral neurons and glial cells in the lamina and medulla of the optic lobes. Expression follows a light-dark cycle, levels show a significant decrease at the end of the night and then remain low throughout the light period (at protein level).

It localises to the nucleus. The protein resides in the cytoplasm. The protein localises to the perinuclear region. In terms of biological role, required for the production of circadian rhythms. The biological cycle depends on the rhythmic formation and nuclear localization of the TIM-PER complex. Light induces the degradation of TIM, which promotes elimination of PER. Nuclear activity of the heterodimer coordinatively regulates PER and TIM transcription through a negative feedback loop. Behaves as a negative element in circadian transcriptional loop. Does not appear to bind DNA, suggesting indirect transcriptional inhibition. The sequence is that of Protein timeless (tim) from Drosophila melanogaster (Fruit fly).